We begin with the raw amino-acid sequence, 392 residues long: Galactokinase (392 aa).

4 residues coordinate alpha-D-galactose: arginine 37, glutamate 43, histidine 44, and aspartate 46. Residues glycine 136, glycine 138, serine 140, and serine 141 each coordinate ATP. Aspartate 186 lines the alpha-D-galactose pocket. Catalysis depends on aspartate 186, which acts as the Proton acceptor. At serine 230 the chain carries Phosphoserine. Tyrosine 236 serves as a coordination point for alpha-D-galactose.

This sequence belongs to the GHMP kinase family. GalK subfamily. As to quaternary structure, homodimer.

The catalysed reaction is alpha-D-galactose + ATP = alpha-D-galactose 1-phosphate + ADP + H(+). It functions in the pathway carbohydrate metabolism; galactose metabolism. Catalyzes the transfer of a phosphate from ATP to alpha-D-galactose and participates in the first committed step in the catabolism of galactose. The chain is Galactokinase (GALK1) from Canis lupus familiaris (Dog).